The following is a 421-amino-acid chain: Ankyrin repeat domain-containing protein 61 (421 aa).

ANK repeat units lie at residues T27–L57, Q74–V103, Q107–L146, N166–A195, S199–C228, T233–A272, E276–I305, and N309–L342.

The protein is Ankyrin repeat domain-containing protein 61 (Ankrd61) of Mus musculus (Mouse).